Here is a 375-residue protein sequence, read N- to C-terminus: Arsenite methyltransferase (375 aa).

Serine 335 carries the post-translational modification Phosphoserine.

The protein belongs to the methyltransferase superfamily. Arsenite methyltransferase family.

Its subcellular location is the cytoplasm. The protein localises to the cytosol. The enzyme catalyses arsenic triglutathione + [thioredoxin]-dithiol + S-adenosyl-L-methionine + 2 H2O = methylarsonous acid + [thioredoxin]-disulfide + 3 glutathione + S-adenosyl-L-homocysteine + H(+). It catalyses the reaction arsenic triglutathione + 2 [thioredoxin]-dithiol + 2 S-adenosyl-L-methionine + H2O = dimethylarsinous acid + 2 [thioredoxin]-disulfide + 3 glutathione + 2 S-adenosyl-L-homocysteine + 2 H(+). The catalysed reaction is arsenic triglutathione + 3 [thioredoxin]-dithiol + 3 S-adenosyl-L-methionine = trimethylarsine + 3 [thioredoxin]-disulfide + 3 glutathione + 3 S-adenosyl-L-homocysteine + 3 H(+). Catalyzes the transfer of a methyl group from AdoMet to trivalent arsenicals producing methylated and dimethylated arsenicals. It methylates arsenite to form methylarsonate, Me-AsO(3)H(2), which is reduced by methylarsonate reductase to methylarsonite, Me-As(OH)2. Methylarsonite is also a substrate and it is converted into the much less toxic compound dimethylarsinate (cacodylate), Me(2)As(O)-OH. The sequence is that of Arsenite methyltransferase (AS3MT) from Homo sapiens (Human).